A 321-amino-acid chain; its full sequence is Serine/threonine-protein phosphatase PP1 isozyme 4 (321 aa).

Ala2 is modified (N-acetylalanine). Mn(2+) contacts are provided by Asp74, His76, Asp102, and Asn134. The Proton donor role is filled by His135. Residues His183 and His258 each contribute to the Mn(2+) site.

The protein belongs to the PPP phosphatase family. PP-1 subfamily. Interacts with the DELLA proteins RGA and GAI. Interacts with PIF3 and PIF5. Interacts with the auxin efflux carrier PIN1. The cofactor is Mn(2+). As to expression, expressed in the vasculature of roots and cotyledons, tips of leaves, guard cells, bases of trichomes, pistils and stamen filaments.

It is found in the nucleus. It localises to the cytoplasm. The catalysed reaction is O-phospho-L-seryl-[protein] + H2O = L-seryl-[protein] + phosphate. It catalyses the reaction O-phospho-L-threonyl-[protein] + H2O = L-threonyl-[protein] + phosphate. With respect to regulation, phosphatase activity is strongly reduced by the protein phosphatase inhibitor 2 (I-2). In terms of biological role, serine/threonine-protein phosphatase that possesses phosphatase activity toward para-nitrophenyl phosphate (pNPP) in vitro. Acts as a positive regulator in the gibberellin (GA) signaling pathway to regulate plant growth and development. Promotes the GA-induced and proteasomal-dependent degradation of the DELLA proteins RGA and GAI by directly binding and dephosphorylating these proteins. Involved in the regulation of phytochrome B (phyB) signaling pathway that controls photomorphogenesis. Promotes the proteasomal-dependent degradation of PIF5 factor by directly binding and dephosphorylating this protein. Involved in the regulation of pavement cell (PC) interdigitation by modulating the auxin efflux carrier PIN1 polarity and endocytic trafficking. Regulates PIN1 polar targeting through direct binding and dephosphorylation. Acts antagonistically with PID in regulating PC development. The protein is Serine/threonine-protein phosphatase PP1 isozyme 4 of Arabidopsis thaliana (Mouse-ear cress).